Here is an 83-residue protein sequence, read N- to C-terminus: Small ribosomal subunit protein bS20 (83 aa).

It belongs to the bacterial ribosomal protein bS20 family.

In terms of biological role, binds directly to 16S ribosomal RNA. This is Small ribosomal subunit protein bS20 from Leuconostoc citreum (strain KM20).